A 503-amino-acid polypeptide reads, in one-letter code: ATP synthase subunit alpha (503 aa).

169–176 (GDRKTGKT) contributes to the ATP binding site.

The protein belongs to the ATPase alpha/beta chains family. F-type ATPases have 2 components, CF(1) - the catalytic core - and CF(0) - the membrane proton channel. CF(1) has five subunits: alpha(3), beta(3), gamma(1), delta(1), epsilon(1). CF(0) has three main subunits: a(1), b(2) and c(9-12). The alpha and beta chains form an alternating ring which encloses part of the gamma chain. CF(1) is attached to CF(0) by a central stalk formed by the gamma and epsilon chains, while a peripheral stalk is formed by the delta and b chains.

It is found in the cell membrane. The enzyme catalyses ATP + H2O + 4 H(+)(in) = ADP + phosphate + 5 H(+)(out). Its activity is regulated as follows. Increases 2-fold following exposure to low pH. Produces ATP from ADP in the presence of a proton gradient across the membrane. The alpha chain is a regulatory subunit. The protein is ATP synthase subunit alpha of Lactobacillus acidophilus (strain ATCC 700396 / NCK56 / N2 / NCFM).